The chain runs to 250 residues: F-box only protein 17 (250 aa).

The F-box domain maps to His15–Gln62. Residues Phe99–His250 enclose the FBA domain.

As to quaternary structure, part of a SCF (SKP1-cullin-F-box) protein ligase complex. Interacts with SKP1 and CUL1.

Its function is as follows. Substrate-recognition component of the SCF (SKP1-CUL1-F-box protein)-type E3 ubiquitin ligase complex. Able to recognize and bind denatured glycoproteins, which are modified with complex-type oligosaccharides. Also recognizes sulfated glycans. Does not bind high-mannose glycoproteins. The polypeptide is F-box only protein 17 (Fbxo17) (Rattus norvegicus (Rat)).